The sequence spans 246 residues: Exosome complex component SKI6 (246 aa).

The protein belongs to the RNase PH family. As to quaternary structure, component of the RNA exosome complex. Specifically part of the catalytically inactive RNA exosome core complex (Exo-9) which may associate with the catalytic subunits RRP6 and DIS3 in cytoplasmic- and nuclear-specific RNA exosome complex forms. Exo-9 is formed by a hexameric base ring of RNase PH domain-containing subunits and a cap ring consisting of CSL4, RRP4 and RRP40.

The protein resides in the cytoplasm. Its subcellular location is the nucleus. It localises to the nucleolus. In terms of biological role, non-catalytic component of the RNA exosome complex which has 3'-&gt;5' exoribonuclease activity and participates in a multitude of cellular RNA processing and degradation events. In the nucleus, the RNA exosome complex is involved in proper maturation of stable RNA species such as rRNA, snRNA and snoRNA, in the elimination of RNA processing by-products and non-coding 'pervasive' transcripts, such as antisense RNA species and cryptic unstable transcripts (CUTs), and of mRNAs with processing defects, thereby limiting or excluding their export to the cytoplasm. In the cytoplasm, the RNA exosome complex is involved in general mRNA turnover and in RNA surveillance pathways, preventing translation of aberrant mRNAs. The catalytic inactive RNA exosome core complex of 9 subunits (Exo-9) is proposed to play a pivotal role in the binding and presentation of RNA for ribonucleolysis, and to serve as a scaffold for the association with catalytic subunits and accessory proteins or complexes. SKI6 is part of the hexameric ring of RNase PH domain-containing subunits proposed to form a central channel which threads RNA substrates for degradation. The sequence is that of Exosome complex component SKI6 (SKI6) from Saccharomyces cerevisiae (strain ATCC 204508 / S288c) (Baker's yeast).